A 544-amino-acid chain; its full sequence is MSIFKKSSNTAPSQHEDVEALASDEADLAALGYKQEFKREFSAWTSFCVSFSVLGLLPSFASTMYYTTGYAGTPAMVWGWLIAMVFVQCVANGMAELCSSMPTSGGLYYAAAVLAPKGWGPFAAWLTGWSNYLVQVTGPPSVAYSFAGMILTLVQLHNPNFETQNYQIFLLAVAAMIAQGFISSMPTKVLAVFNTWGTVLNMLFLAIVMITVLAVAGTKTPRGFNSNHKVWNEFDNQTDWSNGMAMLMSFAGVIWTMSGYDSPFHLSEECSNASVAAPRAIVMTSAFGGIVGWLLNLCIAYTIVDVNAAMNDDLGQPFVVYLRQVCNYKTTVALTSLTVICSFMMGQGCMVAASRVTYSYARDGVFPFSKYLAIVDKRTKTPNVCVWMNVVVGILCCLLIFAGEAAINAIFSVGAIAAFVAFTTPIFLRVFFVKEDEFKRGPWHLGKFSKINGYAACAFVLLMVPILCFPQFRGKDNTPDAMNWTCVVFGGPMLMVLIWWFVSARKWFKGPRLTIGVDDAVSEINVLEGVTKSDDDSISTLKKK.

12 helical membrane passes run 41-61 (FSAWTSFCVSFSVLGLLPSFA), 71-91 (AGTPAMVWGWLIAMVFVQCVA), 106-126 (GLYYAAAVLAPKGWGPFAAWL), 166-186 (YQIFLLAVAAMIAQGFISSMP), 196-216 (WGTVLNMLFLAIVMITVLAVA), 240-260 (WSNGMAMLMSFAGVIWTMSGY), 280-300 (AIVMTSAFGGIVGWLLNLCIA), 332-352 (VALTSLTVICSFMMGQGCMVA), 391-411 (VVGILCCLLIFAGEAAINAIF), 413-433 (VGAIAAFVAFTTPIFLRVFFV), 451-471 (INGYAACAFVLLMVPILCFPQ), and 484-504 (WTCVVFGGPMLMVLIWWFVSA).

The protein belongs to the amino acid-polyamine-organocation (APC) superfamily.

The protein localises to the membrane. This is an uncharacterized protein from Schizosaccharomyces pombe (strain 972 / ATCC 24843) (Fission yeast).